Consider the following 133-residue polypeptide: Snaclec botrocetin subunit alpha (133 aa).

Disulfide bonds link C2-C13, C30-C128, and C103-C120. The C-type lectin domain occupies 9-129 (YEGNCYKFFQ…CAQKNPFVCK (121 aa)).

This sequence belongs to the snaclec family. Heterodimer of subunits alpha and beta; disulfide-linked. Botrocetin and vWF form a soluble complex. In terms of tissue distribution, expressed by the venom gland.

The protein localises to the secreted. Functionally, snaclec that binds to von Willebrand factor (VWF) and induces its interaction with GPIbalpha (GP1BA) (via the vWF A1 domain), resulting in platelet aggregation. This Bothrops jararaca (Jararaca) protein is Snaclec botrocetin subunit alpha.